A 652-amino-acid chain; its full sequence is MKKRIKELTDLLNRYRYDYYTKDAPSVSDSDYDKLYRELVTLEQSYPEYVLQDSPTQQVGGTILKGFEKYRHQYPLFSLQDAFSREELDAFDKRVKAEFPNATYLAELKIDGLSISLSYENGFLQVGATRGDGNIGENITENIKKIKDIPHQLSEPLTITVRGEAYMSRQSFKAINEGRQENGETEFANPRNAAAGTLRQLDTAVVAKRQLATFLYQEVSPTARNQQNEVLAELADLGFSVNPYYQLTSSMDEIWDFIKTIEAKRDQLAYDIDGVVIKVNSLAMQEELGFTVKAPRWAIAYKFPAEEKEAEILSVDWTVGRTGVVTPTANLTPVQLAGTTVSRATLHNVDYIAEKDIRIGDTVIVYKAGDIIPAVLNVVMSKRNQQEVMLIPKLCPSCGSELVHFEDEVALRCINPLCPSLIQRSLEHFASRDAMNITGLGPAIVEKLFLAGFVHDVADIYQLTKEDFMQLDGIKEKSADKLLAAIEASKSNSAEKLLFGLGIRHIGSKVSRLILEVYGDISALLTAKEEEIARIDGLGSTIAQSLTQYFEQKTAAILVDELKTAGVNMHYSGQKVNSDAALFGLTVVLTGKLNQLNRNEAKDKLEALGAKVTGSVSKKTDLVIAGSDAGSKLEKAKSLGIRIEDEDWLRQL.

NAD(+) is bound by residues 29-33, 78-79, and Glu107; these read DSDYD and SL. Lys109 serves as the catalytic N6-AMP-lysine intermediate. NAD(+) is bound by residues Arg130, Glu164, Lys278, and Lys302. Zn(2+)-binding residues include Cys395, Cys398, Cys413, and Cys418. Residues 577 to 652 enclose the BRCT domain; the sequence is NSDAALFGLT…IEDEDWLRQL (76 aa).

Belongs to the NAD-dependent DNA ligase family. LigA subfamily. Requires Mg(2+) as cofactor. It depends on Mn(2+) as a cofactor.

The enzyme catalyses NAD(+) + (deoxyribonucleotide)n-3'-hydroxyl + 5'-phospho-(deoxyribonucleotide)m = (deoxyribonucleotide)n+m + AMP + beta-nicotinamide D-nucleotide.. DNA ligase that catalyzes the formation of phosphodiester linkages between 5'-phosphoryl and 3'-hydroxyl groups in double-stranded DNA using NAD as a coenzyme and as the energy source for the reaction. It is essential for DNA replication and repair of damaged DNA. The sequence is that of DNA ligase from Streptococcus pyogenes serotype M3 (strain ATCC BAA-595 / MGAS315).